Consider the following 471-residue polypeptide: Alpha-amylase (471 aa).

Gln-1 is subject to Pyrrolidone carboxylic acid. Cys-28 and Cys-84 are oxidised to a cystine. Positions 98, 146, and 155 each coordinate Ca(2+). Cys-134 and Cys-148 are joined by a disulfide. Position 183 (Arg-183) interacts with chloride. Residue Asp-185 is the Nucleophile of the active site. His-189 lines the Ca(2+) pocket. Glu-222 serves as the catalytic Proton donor. Asn-285 and Arg-321 together coordinate chloride. Residues 326–343 (FDFTDNDQGPPQDGSGNL) show a composition bias toward polar residues. Positions 326-346 (FDFTDNDQGPPQDGSGNLISP) are disordered. Intrachain disulfides connect Cys-354-Cys-360 and Cys-425-Cys-437.

The protein belongs to the glycosyl hydrolase 13 family. Monomer. The cofactor is Ca(2+). Requires chloride as cofactor.

It carries out the reaction Endohydrolysis of (1-&gt;4)-alpha-D-glucosidic linkages in polysaccharides containing three or more (1-&gt;4)-alpha-linked D-glucose units.. In Tenebrio molitor (Yellow mealworm beetle), this protein is Alpha-amylase.